The chain runs to 428 residues: Serine--tRNA ligase (428 aa).

231 to 233 lines the L-serine pocket; that stretch reads TAE. 262-264 contributes to the ATP binding site; the sequence is RSE. Residue E285 participates in L-serine binding. 349 to 352 contacts ATP; the sequence is EISS. Residue S385 participates in L-serine binding.

This sequence belongs to the class-II aminoacyl-tRNA synthetase family. Type-1 seryl-tRNA synthetase subfamily. Homodimer. The tRNA molecule binds across the dimer.

It localises to the cytoplasm. It carries out the reaction tRNA(Ser) + L-serine + ATP = L-seryl-tRNA(Ser) + AMP + diphosphate + H(+). The enzyme catalyses tRNA(Sec) + L-serine + ATP = L-seryl-tRNA(Sec) + AMP + diphosphate + H(+). It functions in the pathway aminoacyl-tRNA biosynthesis; selenocysteinyl-tRNA(Sec) biosynthesis; L-seryl-tRNA(Sec) from L-serine and tRNA(Sec): step 1/1. Catalyzes the attachment of serine to tRNA(Ser). Is also able to aminoacylate tRNA(Sec) with serine, to form the misacylated tRNA L-seryl-tRNA(Sec), which will be further converted into selenocysteinyl-tRNA(Sec). The chain is Serine--tRNA ligase from Staphylococcus aureus (strain MRSA252).